Consider the following 135-residue polypeptide: Histone H1, macronuclear (135 aa).

The span at Met1–Lys17 shows a compositional bias: low complexity. The segment at Met1–Asn135 is disordered. Composition is skewed to basic residues over residues Ser18–Pro54 and Lys62–Thr79. A compositionally biased stretch (low complexity) spans Lys80–Lys112. Residues Ala113 to Asn135 show a composition bias toward basic residues.

Its subcellular location is the nucleus. The protein resides in the chromosome. Its function is as follows. Histones H1 are necessary for the condensation of nucleosome chains into higher-order structures. This is Histone H1, macronuclear from Euplotes eurystomus (Ciliate).